The following is a 246-amino-acid chain: Acetoacetate decarboxylase (246 aa).

The Schiff-base intermediate with acetoacetate role is filled by lysine 116.

Belongs to the ADC family.

The catalysed reaction is acetoacetate + H(+) = acetone + CO2. Functionally, catalyzes the conversion of acetoacetate to acetone and carbon dioxide. This Burkholderia mallei (strain NCTC 10247) protein is Acetoacetate decarboxylase.